Reading from the N-terminus, the 278-residue chain is 4-deoxy-L-threo-5-hexosulose-uronate ketol-isomerase (278 aa).

4 residues coordinate Zn(2+): His196, His198, Glu203, and His245.

This sequence belongs to the KduI family. As to quaternary structure, homohexamer. It depends on Zn(2+) as a cofactor.

The enzyme catalyses 5-dehydro-4-deoxy-D-glucuronate = 3-deoxy-D-glycero-2,5-hexodiulosonate. It participates in glycan metabolism; pectin degradation; 2-dehydro-3-deoxy-D-gluconate from pectin: step 4/5. Its function is as follows. Catalyzes the isomerization of 5-dehydro-4-deoxy-D-glucuronate to 3-deoxy-D-glycero-2,5-hexodiulosonate. The polypeptide is 4-deoxy-L-threo-5-hexosulose-uronate ketol-isomerase (Escherichia coli (strain K12 / MC4100 / BW2952)).